The chain runs to 228 residues: Aldehyde dehydrogenase 9 (228 aa).

76 to 81 (GSTETA) is an NAD(+) binding site. Active-site residues include Glu-99 and Cys-132.

This sequence belongs to the aldehyde dehydrogenase family.

It carries out the reaction an aldehyde + NAD(+) + H2O = a carboxylate + NADH + 2 H(+). It functions in the pathway alcohol metabolism; ethanol degradation; acetate from ethanol: step 2/2. The protein is Aldehyde dehydrogenase 9 (ALDH9) of Polyandrocarpa misakiensis (Tunicate).